Consider the following 264-residue polypeptide: 5'-nucleotidase SurE (264 aa).

A divalent metal cation-binding residues include aspartate 10, aspartate 11, serine 43, and asparagine 99.

The protein belongs to the SurE nucleotidase family. A divalent metal cation is required as a cofactor.

The protein resides in the cytoplasm. The catalysed reaction is a ribonucleoside 5'-phosphate + H2O = a ribonucleoside + phosphate. Nucleotidase that shows phosphatase activity on nucleoside 5'-monophosphates. This Methanococcus maripaludis (strain C5 / ATCC BAA-1333) protein is 5'-nucleotidase SurE.